A 119-amino-acid chain; its full sequence is MIARRNPEPLRFLPDEARSLPPPKLTDPRLLYIGFLGYCSGLIDNLIRRRPIATAGLHRQLLYITAFFFAGYYLVKREDYLYAVRDREMFGYMKLHPEDFPEEDKKTYGEIFEKFHPIR.

A helical membrane pass occupies residues 56-75; that stretch reads GLHRQLLYITAFFFAGYYLV.

Belongs to the complex I NDUFC2 subunit family. As to quaternary structure, complex I is composed of 45 different subunits. Interacts with TMEM242.

The protein resides in the mitochondrion inner membrane. Functionally, accessory subunit of the mitochondrial membrane respiratory chain NADH dehydrogenase (Complex I), that is believed not to be involved in catalysis but required for the complex assembly. Complex I functions in the transfer of electrons from NADH to the respiratory chain. The immediate electron acceptor for the enzyme is believed to be ubiquinone. The protein is NADH dehydrogenase [ubiquinone] 1 subunit C2 of Gorilla gorilla gorilla (Western lowland gorilla).